A 467-amino-acid polypeptide reads, in one-letter code: Serum response factor homolog B (467 aa).

A compositionally biased stretch (polar residues) spans Met1–Asp15. Disordered stretches follow at residues Met1 to Arg38, Asn115 to Thr245, and Ile301 to Leu467. Residues Ser36–Lys96 enclose the MADS-box domain. Residues Asn128 to Asn205 show a composition bias toward low complexity. Over residues Cys206–Ser220 the composition is skewed to basic and acidic residues. Composition is skewed to low complexity over residues Asn222–Thr245, Ile301–Ile334, Gly347–Asn392, and Pro401–Tyr440. The span at Gln442 to Leu467 shows a compositional bias: polar residues.

It is found in the nucleus. This Dictyostelium discoideum (Social amoeba) protein is Serum response factor homolog B (srfB).